The chain runs to 548 residues: MSSLSTLRILHSTAGRRWASYYGIYPKSAACSSSSVAIARFFSTAADRPPKHAMLSVENKVVAPPMVYIAGEEMTRYACDLVVKSWLEPYFDLSQWEYFDLSCVNRDNTNDQVLRDAVTAGQRIGAIFKEPTITPSAIQKKAFGLKNSLGSPNGAMRAGWNGITISRDTIHIDGIELGYKRPVFFERHAVGGEYGAGWSKVGRGTLLTTYLPSDGRDPFVVDKRDLTDQHNVVVTYHNPYDNVEPLAHLFFQRCLDANITPYVVTKKTVFKWQEGFWAVMKDVFDEHYKSRFEEKGLLQACGGDLQHLISDAATMQLIRWTDGGFGMAAHNYDGDMLTDQIAQVHRSPGFITSNLVGKAPDGSLIKEFEASHGTVSDLWNDHLAGKETSLNPLGLVEAIVGALQHAAVLDAEKNPDDEHKVKARDQIFNFTTTLRTAMHNTFRYGQGTRDMSGPSGYTTEDFVRKVAWRLQRYLDAQYDEAPPPQLGEPSRKLRRNYDIDEEAINGLFQKYDKNGDGFIDFEEFTRMLVKMNLAPLLTKKEKEKKPDV.

Residues 1–53 (MSSLSTLRILHSTAGRRWASYYGIYPKSAACSSSSVAIARFFSTAADRPPKHA) constitute a mitochondrion transit peptide. NAD(+) contacts are provided by residues 132–134 (TIT) and asparagine 153. D-threo-isocitrate-binding positions include 151-157 (SPNGAMR), arginine 187, tyrosine 194, lysine 266, aspartate 311, and aspartate 335. 3 residues coordinate Mg(2+): aspartate 311, aspartate 335, and aspartate 339. Residues 372–377 (HGTVSD) and asparagine 391 contribute to the NAD(+) site. Residues 499–534 (IDEEAINGLFQKYDKNGDGFIDFEEFTRMLVKMNLA) enclose the EF-hand domain. Aspartate 512, asparagine 514, aspartate 516, phenylalanine 518, and glutamate 523 together coordinate Ca(2+).

It belongs to the isocitrate and isopropylmalate dehydrogenases family. Homodimer. It depends on Mg(2+) as a cofactor. Mn(2+) is required as a cofactor.

It is found in the mitochondrion. The enzyme catalyses D-threo-isocitrate + NAD(+) = 2-oxoglutarate + CO2 + NADH. With respect to regulation, the homodimer exhibits allosteric regulation by isocitrate. Activated by Mn(2+) and Mg(2+). No activation by Na(+), K(+) or Li(+). Inhibited by Co(2+), Cu(2+) and Ni(2+), but not with Ca(2+) in the presence of Mn(2+) or Mg(2+). Competitively inhibited by NADH, but no effect on activity by 1.0 mM citrate. Strongly inhibited by excess ATP, ADP, AMP and alpha-ketoglutarate. Performs an essential role in the oxidative function of the tricarboxylic acid cycle and respiration. Catalyzes the decarboxylation of isocitrate to produce 2-oxoglutarate and generate NADH to provide electrons for energy production. No activity with NADP(+). This Phaeodactylum tricornutum (strain CCAP 1055/1) protein is Isocitrate dehydrogenase [NAD(+)] 1, mitochondrial.